A 527-amino-acid chain; its full sequence is Peptide chain release factor 3 (527 aa).

The tr-type G domain occupies 9–277 (AKRRTFAIIS…AVVDWAPLPL (269 aa)). Residues 18 to 25 (SHPDAGKT), 86 to 90 (DTPGH), and 140 to 143 (NKLD) contribute to the GTP site.

It belongs to the TRAFAC class translation factor GTPase superfamily. Classic translation factor GTPase family. PrfC subfamily.

The protein resides in the cytoplasm. Its function is as follows. Increases the formation of ribosomal termination complexes and stimulates activities of RF-1 and RF-2. It binds guanine nucleotides and has strong preference for UGA stop codons. It may interact directly with the ribosome. The stimulation of RF-1 and RF-2 is significantly reduced by GTP and GDP, but not by GMP. The chain is Peptide chain release factor 3 from Pseudomonas fluorescens (strain ATCC BAA-477 / NRRL B-23932 / Pf-5).